Reading from the N-terminus, the 486-residue chain is NGFI-A-binding protein 1 (486 aa).

The NCD1 stretch occupies residues 4–82; sequence ALPRTLGELQ…RDWVTNPGLF (79 aa). Glycyl lysine isopeptide (Lys-Gly) (interchain with G-Cter in SUMO2) cross-links involve residues Lys126, Lys129, and Lys143. Residues 160 to 187 form a disordered region; sequence WQGHHATESEHSLSPADLGSPASPKESS. Ser171 and Ser182 each carry phosphoserine. Lys211 participates in a covalent cross-link: Glycyl lysine isopeptide (Lys-Gly) (interchain with G-Cter in SUMO2). The tract at residues 220 to 309 is NCD2; the sequence is LLKNNKKLAK…ARQVSREVTY (90 aa). The segment at 306–337 is necessary for nuclear localization; sequence EVTYKYTYRTTRLKCGERDELSPKRIKIEDGF. Ser327 is subject to Phosphoserine. Residue Lys332 forms a Glycyl lysine isopeptide (Lys-Gly) (interchain with G-Cter in SUMO1); alternate linkage. Residue Lys332 forms a Glycyl lysine isopeptide (Lys-Gly) (interchain with G-Cter in SUMO2); alternate linkage. Residues Lys354, Lys368, and Lys372 each participate in a glycyl lysine isopeptide (Lys-Gly) (interchain with G-Cter in SUMO2) cross-link. The tract at residues 398–438 is disordered; sequence RQSSGEQSPDGGLPSDSSDGQGERPLNLRIPSVQNRQPHHF. Low complexity predominate over residues 404 to 417; sequence QSPDGGLPSDSSDG. The residue at position 405 (Ser405) is a Phosphoserine. Glycyl lysine isopeptide (Lys-Gly) (interchain with G-Cter in SUMO2) cross-links involve residues Lys453, Lys464, and Lys476. Lys479 is covalently cross-linked (Glycyl lysine isopeptide (Lys-Gly) (interchain with G-Cter in SUMO1); alternate). A Glycyl lysine isopeptide (Lys-Gly) (interchain with G-Cter in SUMO2); alternate cross-link involves residue Lys479.

It belongs to the NAB family. In terms of assembly, homomultimers may associate with EGR1 bound to DNA. Widely expressed in adult. In day 16 embryo highest levels in forebrain, thymus, salivary gland and cartilage.

The protein resides in the nucleus. Its function is as follows. Acts as a transcriptional repressor for zinc finger transcription factors EGR1 and EGR2. The protein is NGFI-A-binding protein 1 (Nab1) of Mus musculus (Mouse).